A 79-amino-acid polypeptide reads, in one-letter code: Small ribosomal subunit protein bS18 (79 aa).

Belongs to the bacterial ribosomal protein bS18 family. In terms of assembly, part of the 30S ribosomal subunit. Forms a tight heterodimer with protein bS6.

In terms of biological role, binds as a heterodimer with protein bS6 to the central domain of the 16S rRNA, where it helps stabilize the platform of the 30S subunit. The protein is Small ribosomal subunit protein bS18 of Listeria innocua serovar 6a (strain ATCC BAA-680 / CLIP 11262).